The sequence spans 515 residues: Cyclic AMP receptor-like protein G (515 aa).

Residues 1 to 16 (MSSIIFIPNDADNINS) are Extracellular-facing. The chain crosses the membrane as a helical span at residues 17-37 (IMVTISSSLSLVGCLFILSIY). The Cytoplasmic segment spans residues 38–50 (IYYKELREFQLKL). The chain crosses the membrane as a helical span at residues 51-71 (IFIMTINDFIISIIFLIATHI). Over 72-92 (QTKYFDAITNVFPFFCNFPDS) the chain is Extracellular. The chain crosses the membrane as a helical span at residues 93–113 (LLHYFFLSSFFWEVCIAHTLI). The Cytoplasmic segment spans residues 114-129 (QVIKYNNDKVEDNLKK). Residues 130 to 150 (YFIFSNGLSALIMVSLFFIRS) form a helical membrane-spanning segment. Residues 151-164 (YSKIDCHHDSIFPH) are Extracellular-facing. Residues 165–185 (LLFFIPLLLTWIYNIIVCALL) traverse the membrane as a helical segment. At 186–276 (TKTFKEQAMN…IRKTPNIIWT (91 aa)) the chain is on the cytoplasmic side. Residues 277-297 (SIFFLFSFGFIWSWSILVIIL) traverse the membrane as a helical segment. At 298-306 (KYLSLDVKY) the chain is on the extracellular side. The chain crosses the membrane as a helical span at residues 307 to 327 (ILMISYFFIPLHGCMNAVCFG). At 328 to 515 (VNDRLRMNLK…FCTIDEDETK (188 aa)) the chain is on the cytoplasmic side. Residues 362–375 (NGNNKNNKNNNGAN) show a composition bias toward low complexity. Disordered regions lie at residues 362–409 (NGNN…YYQI) and 469–515 (NNNN…DETK). Over residues 385–396 (SPDDDDDEDDDN) the composition is skewed to acidic residues. Composition is skewed to low complexity over residues 397 to 407 (NNNNYSDGNYY) and 469 to 504 (NNNN…NNNN).

It belongs to the G-protein coupled receptor 5 family.

It is found in the membrane. In terms of biological role, receptor for cAMP. This chain is Cyclic AMP receptor-like protein G (crlG), found in Dictyostelium discoideum (Social amoeba).